Consider the following 130-residue polypeptide: Metastasis-suppressor KiSS-1 (130 aa).

The signal sequence occupies residues 1–19; sequence MISLASWQLLLLLCVASFG. The segment at 52 to 91 is disordered; that stretch reads RYAESKPGAAGLRARRTSPCPPVENPTGHQRPPCATRSRL. C71 and C85 are oxidised to a cystine. Y110 is subject to Phosphotyrosine. The essential for receptor binding and receptor activation stretch occupies residues 110–119; it reads YNWNSFGLRY. Tyrosine amide is present on Y119.

This sequence belongs to the KISS1 family. In terms of tissue distribution, highest levels in the cecum and colon. Moderate levels present in the liver, spleen, kidney, ovary, uterus and small intestine. Low levels in the stomach, pancreas and placenta. Expressed only moderately in the placenta. Persistent expression is detected in hypothalamus throughout postnatal development, with maximum expression levels at puberty in both male and female. Hypothalamic expression is sensitive to neonatal imprinting by estrogen. Expression is higher in the hypothalamus than in the brainstem and spinal cord. In the brain, metastin-like immunoreactivity is found mainly in three groups of cells: dorsomedial hypothalamic nucleus, nucleus of the solitary tract, and caudal ventrolateral medulla.

It localises to the secreted. Its function is as follows. Metastasis suppressor protein. May regulate events downstream of cell-matrix adhesion, perhaps involving cytoskeletal reorganization. Generates a C-terminally amidated peptide, metastin which functions as the endogenous ligand of the G-protein coupled receptor GPR54. The receptor is also essential for normal gonadotropin-released hormone physiology and for puberty. The hypothalamic KiSS1/GPR54 system is a pivotal factor in central regulation of the gonadotropic axis at puberty and in adulthood. Intracerebroventricular administration induces an increase in serum LH and FSH levels in prepubertal male and female as well as in adult animals. This chain is Metastasis-suppressor KiSS-1 (Kiss1), found in Rattus norvegicus (Rat).